Here is a 282-residue protein sequence, read N- to C-terminus: ATP phosphoribosyltransferase (282 aa).

Belongs to the ATP phosphoribosyltransferase family. Long subfamily. Requires Mg(2+) as cofactor.

The protein localises to the cytoplasm. The enzyme catalyses 1-(5-phospho-beta-D-ribosyl)-ATP + diphosphate = 5-phospho-alpha-D-ribose 1-diphosphate + ATP. Its pathway is amino-acid biosynthesis; L-histidine biosynthesis; L-histidine from 5-phospho-alpha-D-ribose 1-diphosphate: step 1/9. With respect to regulation, feedback inhibited by histidine. Its function is as follows. Catalyzes the condensation of ATP and 5-phosphoribose 1-diphosphate to form N'-(5'-phosphoribosyl)-ATP (PR-ATP). Has a crucial role in the pathway because the rate of histidine biosynthesis seems to be controlled primarily by regulation of HisG enzymatic activity. This chain is ATP phosphoribosyltransferase, found in Haloarcula marismortui (strain ATCC 43049 / DSM 3752 / JCM 8966 / VKM B-1809) (Halobacterium marismortui).